We begin with the raw amino-acid sequence, 438 residues long: Dihydroorotase (438 aa).

Zn(2+)-binding residues include His-58 and His-60. Substrate-binding positions include 60–62 (HLR) and Asn-92. Residues Asp-152, His-179, and His-232 each coordinate Zn(2+). Asn-278 is a binding site for substrate. A Zn(2+)-binding site is contributed by Asp-305. Asp-305 is a catalytic residue. Residues His-309 and 323–324 (FG) contribute to the substrate site.

Belongs to the metallo-dependent hydrolases superfamily. DHOase family. Class I DHOase subfamily. It depends on Zn(2+) as a cofactor.

The catalysed reaction is (S)-dihydroorotate + H2O = N-carbamoyl-L-aspartate + H(+). It participates in pyrimidine metabolism; UMP biosynthesis via de novo pathway; (S)-dihydroorotate from bicarbonate: step 3/3. Catalyzes the reversible cyclization of carbamoyl aspartate to dihydroorotate. In Leifsonia xyli subsp. xyli (strain CTCB07), this protein is Dihydroorotase.